A 146-amino-acid chain; its full sequence is [Ribosomal protein bS18]-alanine N-acetyltransferase (146 aa).

One can recognise an N-acetyltransferase domain in the interval 2 to 146; sequence SIISQIEACD…ENAVVMACYL (145 aa). 69-71 serves as a coordination point for acetyl-CoA; the sequence is IAI. E103 acts as the Proton acceptor in catalysis. N108 provides a ligand contact to acetyl-CoA. Catalysis depends on Y114, which acts as the Proton donor.

Belongs to the acetyltransferase family. RimI subfamily.

The protein localises to the cytoplasm. It carries out the reaction N-terminal L-alanyl-[ribosomal protein bS18] + acetyl-CoA = N-terminal N(alpha)-acetyl-L-alanyl-[ribosomal protein bS18] + CoA + H(+). In terms of biological role, acetylates the N-terminal alanine of ribosomal protein bS18. The sequence is that of [Ribosomal protein bS18]-alanine N-acetyltransferase from Haemophilus influenzae (strain ATCC 51907 / DSM 11121 / KW20 / Rd).